The sequence spans 389 residues: Chalcone synthase (389 aa).

Residues C164, H303, and N336 contribute to the active site.

Belongs to the thiolase-like superfamily. Chalcone/stilbene synthases family. As to quaternary structure, homodimer. In terms of tissue distribution, mainly expressed in flowers, to a lower extent in young leaves, and barely in mature leaves and twigs.

The enzyme catalyses (E)-4-coumaroyl-CoA + 3 malonyl-CoA + 3 H(+) = 2',4,4',6'-tetrahydroxychalcone + 3 CO2 + 4 CoA. Its pathway is secondary metabolite biosynthesis; flavonoid biosynthesis. In terms of biological role, the primary product of this enzyme is 4,2',4',6'-tetrahydroxychalcone (also termed naringenin-chalcone or chalcone) which can under specific conditions spontaneously isomerize into naringenin. This Rhododendron dauricum (Azalea daurica) protein is Chalcone synthase.